The sequence spans 147 residues: MYPAHLLVLLAVCVSLLGASDIPPQPLNLYQFSNMIQCANRGRRPTKHYMDYGCYCGKGGSGTPVDELDRCCKVHDDCYGEAEKSQNCAPYWTWYTWKCGSDGPQCDDSETGCQRSVCECDAIAAKCFAKAPYNDANWDIDTETRCQ.

A signal peptide spans 1-19; the sequence is MYPAHLLVLLAVCVSLLGA. A propeptide spanning residues 20 to 27 is cleaved from the precursor; it reads SDIPPQPL. 7 disulfides stabilise this stretch: cysteine 38-cysteine 99, cysteine 54-cysteine 146, cysteine 56-cysteine 72, cysteine 71-cysteine 127, cysteine 78-cysteine 120, cysteine 88-cysteine 113, and cysteine 106-cysteine 118. Residues tyrosine 55, glycine 57, and glycine 59 each coordinate Ca(2+). Histidine 75 is a catalytic residue. Residue aspartate 76 coordinates Ca(2+). Aspartate 121 is an active-site residue.

This sequence belongs to the phospholipase A2 family. Group I subfamily. D49 sub-subfamily. Ca(2+) serves as cofactor. As to expression, expressed by the venom gland.

The protein resides in the secreted. It catalyses the reaction a 1,2-diacyl-sn-glycero-3-phosphocholine + H2O = a 1-acyl-sn-glycero-3-phosphocholine + a fatty acid + H(+). Its function is as follows. Snake venom phospholipase A2 (PLA2) that inhibits collagen-induced platelet aggregation. PLA2 catalyzes the calcium-dependent hydrolysis of the 2-acyl groups in 3-sn-phosphoglycerides. This Austrelaps superbus (Lowland copperhead snake) protein is Acidic phospholipase A2 S9-53F.